A 507-amino-acid polypeptide reads, in one-letter code: Histidine ammonia-lyase (507 aa).

A cross-link (5-imidazolinone (Ala-Gly)) is located at residues 141–143 (ASG). Ser-142 is subject to 2,3-didehydroalanine (Ser).

The protein belongs to the PAL/histidase family. In terms of processing, contains an active site 4-methylidene-imidazol-5-one (MIO), which is formed autocatalytically by cyclization and dehydration of residues Ala-Ser-Gly.

It localises to the cytoplasm. The enzyme catalyses L-histidine = trans-urocanate + NH4(+). It participates in amino-acid degradation; L-histidine degradation into L-glutamate; N-formimidoyl-L-glutamate from L-histidine: step 1/3. This chain is Histidine ammonia-lyase, found in Burkholderia orbicola (strain MC0-3).